The sequence spans 270 residues: Interleukin-1 alpha (270 aa).

A propeptide spanning residues 1-114 (MAKVPDLFED…HDLEETIQPR (114 aa)) is cleaved from the precursor. A glycan (N-linked (GlcNAc...) asparagine) is linked at Asn-64. Lys-85 carries the N6-acetyllysine modification. The interval 85-89 (KKRRL) is nuclear localization signal (NLS). Position 90 is a phosphoserine (Ser-90). Asn-139 and Asn-143 each carry an N-linked (GlcNAc...) asparagine glycan.

The protein belongs to the IL-1 family. Monomer. Interacts with TMED10; the interaction mediates the translocation from the cytoplasm into the ERGIC (endoplasmic reticulum-Golgi intermediate compartment) and thereby secretion. Interacts with IL1R1. Interacts with S100A13; this interaction is the first step in the export of IL1A, followed by direct translocation of this complex across the plasma membrane. Acetylated within its nuclear localization sequence, which impacts subcellular localization. Post-translationally, proteolytic processed by CAPN1 in a calcium-dependent manner. Cleavage from 31 kDa precursor to 18 kDa biologically active molecules. In terms of processing, phosphorylated. Phosphorylation greatly enhances susceptibility to digestion and promotes the conversion of pre-IL1A alpha to the biologically active IL1A.

It localises to the nucleus. It is found in the cytoplasm. The protein localises to the secreted. Its function is as follows. Cytokine constitutively present intracellularly in nearly all resting non-hematopoietic cells that plays an important role in inflammation and bridges the innate and adaptive immune systems. After binding to its receptor IL1R1 together with its accessory protein IL1RAP, forms the high affinity interleukin-1 receptor complex. Signaling involves the recruitment of adapter molecules such as MYD88, IRAK1 or IRAK4. In turn, mediates the activation of NF-kappa-B and the three MAPK pathways p38, p42/p44 and JNK pathways. Within the cell, acts as an alarmin and cell death results in its liberation in the extracellular space after disruption of the cell membrane to induce inflammation and alert the host to injury or damage. In addition to its role as a danger signal, which occurs when the cytokine is passively released by cell necrosis, directly senses DNA damage and acts as a signal for genotoxic stress without loss of cell integrity. This chain is Interleukin-1 alpha, found in Mus musculus (Mouse).